Reading from the N-terminus, the 713-residue chain is Methionine--tRNA ligase (713 aa).

The short motif at 17–27 is the 'HIGH' region element; sequence PYANGPIHIGH. Cys-149, Cys-152, Cys-162, and Cys-165 together coordinate Zn(2+). A 'KMSKS' region motif is present at residues 345–349; that stretch reads KLSTS. Thr-348 contributes to the ATP binding site. A disordered region spans residues 530–564; it reads VRTSTPDDDPAGAVGWEDAGAPLLPAGHPIPSGPD. In terms of domain architecture, tRNA-binding spans 614-713; sequence DFTQLDLRAG…TEAEDGSVVR (100 aa).

The protein belongs to the class-I aminoacyl-tRNA synthetase family. MetG type 1 subfamily. In terms of assembly, homodimer. Zn(2+) serves as cofactor.

It localises to the cytoplasm. The catalysed reaction is tRNA(Met) + L-methionine + ATP = L-methionyl-tRNA(Met) + AMP + diphosphate. Its function is as follows. Is required not only for elongation of protein synthesis but also for the initiation of all mRNA translation through initiator tRNA(fMet) aminoacylation. This chain is Methionine--tRNA ligase, found in Salinibacter ruber (strain DSM 13855 / M31).